We begin with the raw amino-acid sequence, 327 residues long: GTPase Obg (327 aa).

In terms of domain architecture, Obg spans Met1 to Met159. Residues Gly120–Gly145 are disordered. In terms of domain architecture, OBG-type G spans Ala160–Asn323. Residues Gly166–Ser173, Phe191–Val195, Asp213–Gly216, Thr280–Asp283, and Ser304–Ile306 each bind GTP. Residues Ser173 and Thr193 each coordinate Mg(2+).

The protein belongs to the TRAFAC class OBG-HflX-like GTPase superfamily. OBG GTPase family. Monomer. Mg(2+) serves as cofactor.

It localises to the cytoplasm. In terms of biological role, an essential GTPase which binds GTP, GDP and possibly (p)ppGpp with moderate affinity, with high nucleotide exchange rates and a fairly low GTP hydrolysis rate. Plays a role in control of the cell cycle, stress response, ribosome biogenesis and in those bacteria that undergo differentiation, in morphogenesis control. The protein is GTPase Obg of Prosthecochloris aestuarii (strain DSM 271 / SK 413).